Here is a 330-residue protein sequence, read N- to C-terminus: Probable deoxyhypusine synthase (330 aa).

The tract at residues 1–25 (MTGDDADETHENVVPGSDEDLDTPD) is disordered. Lys-298 functions as the Nucleophile in the catalytic mechanism.

This sequence belongs to the deoxyhypusine synthase family. It depends on NAD(+) as a cofactor.

It catalyses the reaction [eIF5A protein]-L-lysine + spermidine = [eIF5A protein]-deoxyhypusine + propane-1,3-diamine. The protein operates within protein modification; eIF5A hypusination. Catalyzes the NAD-dependent oxidative cleavage of spermidine and the subsequent transfer of the butylamine moiety of spermidine to the epsilon-amino group of a specific lysine residue of the eIF-5A precursor protein to form the intermediate deoxyhypusine residue. This is Probable deoxyhypusine synthase from Halobacterium salinarum (strain ATCC 29341 / DSM 671 / R1).